Here is a 101-residue protein sequence, read N- to C-terminus: Small ribosomal subunit protein uS14 (101 aa).

Belongs to the universal ribosomal protein uS14 family. In terms of assembly, part of the 30S ribosomal subunit. Contacts proteins S3 and S10.

In terms of biological role, binds 16S rRNA, required for the assembly of 30S particles and may also be responsible for determining the conformation of the 16S rRNA at the A site. The polypeptide is Small ribosomal subunit protein uS14 (Chelativorans sp. (strain BNC1)).